We begin with the raw amino-acid sequence, 449 residues long: Asparagine--tRNA ligase (449 aa).

This sequence belongs to the class-II aminoacyl-tRNA synthetase family. In terms of assembly, homodimer.

The protein localises to the cytoplasm. The enzyme catalyses tRNA(Asn) + L-asparagine + ATP = L-asparaginyl-tRNA(Asn) + AMP + diphosphate + H(+). This chain is Asparagine--tRNA ligase, found in Mesomycoplasma hyopneumoniae (strain J / ATCC 25934 / NCTC 10110) (Mycoplasma hyopneumoniae).